The chain runs to 692 residues: Elongation factor G (692 aa).

Positions 8 to 282 (AKTRNIGIMA…AVIAYLPSPL (275 aa)) constitute a tr-type G domain. GTP is bound by residues 17–24 (AHVDAGKT), 81–85 (DTPGH), and 135–138 (NKMD).

It belongs to the TRAFAC class translation factor GTPase superfamily. Classic translation factor GTPase family. EF-G/EF-2 subfamily.

It localises to the cytoplasm. In terms of biological role, catalyzes the GTP-dependent ribosomal translocation step during translation elongation. During this step, the ribosome changes from the pre-translocational (PRE) to the post-translocational (POST) state as the newly formed A-site-bound peptidyl-tRNA and P-site-bound deacylated tRNA move to the P and E sites, respectively. Catalyzes the coordinated movement of the two tRNA molecules, the mRNA and conformational changes in the ribosome. This chain is Elongation factor G, found in Streptococcus pyogenes serotype M49 (strain NZ131).